We begin with the raw amino-acid sequence, 216 residues long: Pyrophosphatase PpaX (216 aa).

Aspartate 9 serves as the catalytic Nucleophile.

Belongs to the HAD-like hydrolase superfamily. PpaX family. It depends on Mg(2+) as a cofactor.

It carries out the reaction diphosphate + H2O = 2 phosphate + H(+). Its function is as follows. Hydrolyzes pyrophosphate formed during P-Ser-HPr dephosphorylation by HPrK/P. Might play a role in controlling the intracellular pyrophosphate pool. The chain is Pyrophosphatase PpaX from Bacillus cereus (strain Q1).